Here is a 359-residue protein sequence, read N- to C-terminus: Membrane-bound lytic murein transglycosylase C (359 aa).

The first 16 residues, 1-16 (MKKYLALALIAPLLIS), serve as a signal peptide directing secretion. Residue cysteine 17 is the site of N-palmitoyl cysteine attachment. Cysteine 17 carries S-diacylglycerol cysteine lipidation.

This sequence belongs to the transglycosylase Slt family.

It localises to the cell outer membrane. The enzyme catalyses Exolytic cleavage of the (1-&gt;4)-beta-glycosidic linkage between N-acetylmuramic acid (MurNAc) and N-acetylglucosamine (GlcNAc) residues in peptidoglycan, from either the reducing or the non-reducing ends of the peptidoglycan chains, with concomitant formation of a 1,6-anhydrobond in the MurNAc residue.. Murein-degrading enzyme. May play a role in recycling of muropeptides during cell elongation and/or cell division. The chain is Membrane-bound lytic murein transglycosylase C from Escherichia coli O7:K1 (strain IAI39 / ExPEC).